A 2290-amino-acid polypeptide reads, in one-letter code: Protein Ycf2 (2290 aa).

Residue 1638–1645 coordinates ATP; sequence GSIGTGRS.

Belongs to the Ycf2 family.

Its subcellular location is the plastid. It is found in the chloroplast stroma. Its function is as follows. Probable ATPase of unknown function. Its presence in a non-photosynthetic plant (Epifagus virginiana) and experiments in tobacco indicate that it has an essential function which is probably not related to photosynthesis. In Phalaenopsis aphrodite subsp. formosana (Moth orchid), this protein is Protein Ycf2.